The primary structure comprises 163 residues: Ribosome maturation factor RimP (163 aa).

Belongs to the RimP family.

Its subcellular location is the cytoplasm. Required for maturation of 30S ribosomal subunits. This Bordetella petrii (strain ATCC BAA-461 / DSM 12804 / CCUG 43448) protein is Ribosome maturation factor RimP.